A 308-amino-acid polypeptide reads, in one-letter code: Ornithine carbamoyltransferase (308 aa).

Residues 56 to 59, Gln-83, Arg-107, and 134 to 137 each bind carbamoyl phosphate; these read STRT and HPCQ. L-ornithine is bound by residues Asn-165, Asp-225, and 229–230; that span reads SM. Residues 266-267 and Arg-294 contribute to the carbamoyl phosphate site; that span reads CL.

It belongs to the aspartate/ornithine carbamoyltransferase superfamily. OTCase family.

It is found in the cytoplasm. The enzyme catalyses carbamoyl phosphate + L-ornithine = L-citrulline + phosphate + H(+). It participates in amino-acid biosynthesis; L-arginine biosynthesis; L-arginine from L-ornithine and carbamoyl phosphate: step 1/3. Reversibly catalyzes the transfer of the carbamoyl group from carbamoyl phosphate (CP) to the N(epsilon) atom of ornithine (ORN) to produce L-citrulline. The protein is Ornithine carbamoyltransferase of Ruegeria pomeroyi (strain ATCC 700808 / DSM 15171 / DSS-3) (Silicibacter pomeroyi).